Here is a 708-residue protein sequence, read N- to C-terminus: Outer capsid protein mu-1 (708 aa).

The N-myristoyl glycine; by host moiety is linked to residue Gly-2. N-linked (GlcNAc...) asparagine; by host glycans are attached at residues Asn-3, Asn-12, Asn-81, Asn-110, Asn-458, Asn-482, Asn-528, and Asn-659. Positions 675–708 (PKPDCPTSGDSGESSNRRVKRDSYAGVVKRGYTR) are disordered.

Belongs to the orthoreovirus mu-1 protein family. In terms of assembly, heterohexamer of three sigma-3 and three Mu-1 proteins. In terms of processing, cleaved during the endosomal proteolytic disassembly of the outer capsid. Mu-1 is proteolytically cleaved into mu-1N and mu-1C during the maturation step to generate the ISVP. Cleavage of mu-1 to mu-1C is dependent on myristoylation and binding to sigma-3 protein. Mu-1C is further cleaved into delta (59 kDa), and phi (13 kDa) segments during entry into the host cell cytoplasm. Mu-1 and mu-1N are N-terminally myristoylated. This acylation is essential for the membrane fusion activity.

It is found in the virion. The protein resides in the host cell membrane. The protein localises to the host endoplasmic reticulum. It localises to the host mitochondrion. Major outer capsid protein involved in host cell membrane penetration. In the endocytic compartment, outer-capsid protein sigma-3 is removed by cathepsin proteases, which exposes the viral membrane-penetration protein mu-1. Both myristoylated peptides mu-1N and phi are released during infectious subvirion particles (ISVP) formation in the endosome. They associate with host membranes and mu-1N induces permeabilization and delivery of transcriptionally active viral particles into the host cell cytoplasm. Seems to induce apoptosis in the host cell. In terms of biological role, the viral outer shell polypeptides, of which mu-1 is one, impose structural constraints that prevent elongation of nascent transcripts by the RNA-dependent RNA polymerase lambda-3. This chain is Outer capsid protein mu-1 (M2), found in Mammalia (T3D).